Consider the following 577-residue polypeptide: MPRVPSASATGSSALLSLLCAFSLGRAAPFQLTILHTNDVHARVEETNQDSGKCFTQSFAGVARRWTKIEELRARDKNVLLLDAGDQYQGTIWFNYYKGAEAAHFIEAVGYNAMALGNHEFDNGAEGLLDPFLLNVSFPVLSANLEQGEDQVPSLIGYYKPSTVLDVNGEKIGVVGYTSKETPTLSSPGPHLIFKDEIQAVQHEVDILVSQGIDKIIALGHSGFETDKLIAQKVRGVDVVVGGHSNTFLYTGKAPSNDVPVGPYPFLVNSDDQRTIPVVQAYAYGKYLGYLKLTFDKGEVIKREGNPILLNSSIIQDPVLLAEVNKWKESLANFGKEVIGRTVVYLNGTTEECRNRECNMGNLICDAMIQQNIRNPDEKFWNHVSICIFQGGGIRAPINEQNNGTIQVDSLLAVLPFGSTIDLLEVYGSTLRAAFDHSVRRYGQNTGEFLQVSGIQVQFNLKRPPGSRVVKIDVLCADCRVPHYQPLLDNKIYKIVTNSYIAEGGDGFTMLKNERLRYDTGSTDISVVSSYIKQMKVVYPAVEGRILFVENSATLPIINLKIGLSLFAFLTWFLHCS.

The first 30 residues, 1–30 (MPRVPSASATGSSALLSLLCAFSLGRAAPF), serve as a signal peptide directing secretion. The Zn(2+) site is built by D39, H41, D86, and N118. N135 is a glycosylation site (N-linked (GlcNAc...) asparagine). The Zn(2+) site is built by H221 and H244. A substrate-binding site is contributed by N246. Residues N311 and N347 are each glycosylated (N-linked (GlcNAc...) asparagine). 2 disulfide bridges follow: C353–C358 and C365–C387. R354 lines the substrate pocket. 2 residues coordinate substrate: Q390 and R395. N403 is a glycosylation site (N-linked (GlcNAc...) asparagine). F417 is a binding site for substrate. Cysteines 476 and 479 form a disulfide. Position 500–506 (500–506 (YIAEGGD)) interacts with substrate. S552 carries GPI-anchor amidated serine lipidation. A propeptide spans 553–577 (ATLPIINLKIGLSLFAFLTWFLHCS) (removed in mature form).

Belongs to the 5'-nucleotidase family. In terms of assembly, homodimer. It depends on Zn(2+) as a cofactor.

The protein localises to the cell membrane. It carries out the reaction a ribonucleoside 5'-phosphate + H2O = a ribonucleoside + phosphate. Functionally, hydrolyzes extracellular nucleotides into membrane permeable nucleosides. This Diplobatis ommata (Ocellated electric ray) protein is 5'-nucleotidase.